Here is a 157-residue protein sequence, read N- to C-terminus: UPF0225 protein PA1039 (157 aa).

The protein belongs to the UPF0225 family.

This Pseudomonas aeruginosa (strain ATCC 15692 / DSM 22644 / CIP 104116 / JCM 14847 / LMG 12228 / 1C / PRS 101 / PAO1) protein is UPF0225 protein PA1039.